A 248-amino-acid polypeptide reads, in one-letter code: MLGNHQIIRADGRKVDELRPVRITRHFTDAPEGSVLIECGNTRVMCTATFTPGVPRWRKDSGLGWVTAEYSMLPRATAERTDRESVRGKIGGRTHEISRLIGRCLRGVIDMKALGENQIQLDCDVLQADGGTRTASVTGAYVALVDAVNWAEKHRHIKSASRVLKDYVSAVSVGVINGTPMLDLPYIEDSQAMTDMNVAMTGSGTFIEIQGTAEHRPFNRAELGTLLDLAEKGNKELQAAQRAALSLD.

Residues Arg93 and 131–133 (GTR) each bind phosphate.

It belongs to the RNase PH family. As to quaternary structure, homohexameric ring arranged as a trimer of dimers.

The enzyme catalyses tRNA(n+1) + phosphate = tRNA(n) + a ribonucleoside 5'-diphosphate. In terms of biological role, phosphorolytic 3'-5' exoribonuclease that plays an important role in tRNA 3'-end maturation. Removes nucleotide residues following the 3'-CCA terminus of tRNAs; can also add nucleotides to the ends of RNA molecules by using nucleoside diphosphates as substrates, but this may not be physiologically important. Probably plays a role in initiation of 16S rRNA degradation (leading to ribosome degradation) during starvation. This Bifidobacterium longum (strain NCC 2705) protein is Ribonuclease PH.